The primary structure comprises 109 residues: Small ribosomal subunit protein uS17 (109 aa).

Belongs to the universal ribosomal protein uS17 family. As to quaternary structure, part of the 30S ribosomal subunit.

Its function is as follows. One of the primary rRNA binding proteins, it binds specifically to the 5'-end of 16S ribosomal RNA. This is Small ribosomal subunit protein uS17 from Methanococcoides burtonii (strain DSM 6242 / NBRC 107633 / OCM 468 / ACE-M).